The following is a 766-amino-acid chain: Flocculation suppression protein (766 aa).

Disordered regions lie at residues 1–52 (MSEE…HGSK), 129–181 (HDHS…PTKI), 203–247 (KRRA…SSNS), 547–619 (KPVP…SISG), and 657–766 (SVTP…KVKM). Composition is skewed to low complexity over residues 8-19 (SAPAPASTPAPA) and 134-147 (NDANSGDDANTNDD). Residues 64-186 (IFIHKLYQIL…NPTKIWEFKH (123 aa)) mediate DNA binding. Over residues 171–181 (QEKEKSNPTKI) the composition is skewed to basic and acidic residues. Residues 208–224 (SRNNSSINSRKNSSNQN) show a composition bias toward low complexity. A Phosphoserine modification is found at Ser220. Residues 236–247 (SSIQDPSTSSNS) are compositionally biased toward polar residues. At Ser556 the chain carries Phosphoserine. Polar residues predominate over residues 679–699 (AVSSNLINSPMNVEHSSSLSQ). Positions 708–719 (LPQPSLPTTSTT) are enriched in low complexity. Phosphoserine is present on Ser733. Residues 738–750 (LLNQEDSSTSSAD) are compositionally biased toward polar residues.

The protein in the N-terminal section; belongs to the HSF family.

Its subcellular location is the nucleus. Functionally, involved in cell surface assembly and regulation of the gene related to flocculation (asexual cell aggregation). Mutations in SFL1 causes constitutive cell aggregation. In Saccharomyces cerevisiae (strain ATCC 204508 / S288c) (Baker's yeast), this protein is Flocculation suppression protein (SFL1).